A 1038-amino-acid polypeptide reads, in one-letter code: DNA polymerase delta catalytic subunit (1038 aa).

The disordered stretch occupies residues M1–E29. Residues C942, C945, C958, and C961 each coordinate Zn(2+). Residues C942 to C961 form a CysA-type zinc finger. Residues C992, C995, C1005, and C1010 each coordinate [4Fe-4S] cluster. The CysB motif signature appears at C992–C1010.

This sequence belongs to the DNA polymerase type-B family. Heterodimer with subunits of 125 kDa and 50 kDa. The 125 kDa subunit contains the polymerase active site and most likely the active site for the 3'-5' exonuclease activity. Requires [4Fe-4S] cluster as cofactor.

Its subcellular location is the nucleus. The catalysed reaction is DNA(n) + a 2'-deoxyribonucleoside 5'-triphosphate = DNA(n+1) + diphosphate. This polymerase possesses two enzymatic activities: DNA synthesis (polymerase) and an exonucleolytic activity that degrades single-stranded DNA in the 3'- to 5'-direction. The chain is DNA polymerase delta catalytic subunit (POL3) from Candida albicans (Yeast).